The sequence spans 645 residues: Cytoplasmic dynein 1 intermediate chain 1 (645 aa).

Basic and acidic residues-rich tracts occupy residues 1 to 13 (MSDK…ELER) and 20 to 58 (QIRE…KRRE). Disordered regions lie at residues 1-58 (MSDK…KRRE) and 96-125 (MSPS…RTLQ). N-acetylserine is present on Ser2. An interaction with DCTN1 region spans residues 2–123 (SDKSDLKAEL…SGDLGPLTRT (122 aa)). Ser50 and Ser100 each carry phosphoserine. A compositionally biased stretch (low complexity) spans 96–107 (MSPSSKSVSTPS). A Phosphothreonine modification is found at Thr105. Phosphoserine occurs at positions 107, 111, and 114. Residues 147–163 (KLGVSKVTQVDFLPREV) are interaction with DYNLT1. The interval 169–221 (ETQTPLATHQSEEDEEDEEMVESKVGQDSELENQDKKQEVKEAPPRELTEEEK) is disordered. Thr176 carries the post-translational modification Phosphothreonine. Ser179 and Ser197 each carry phosphoserine. Basic and acidic residues predominate over residues 189 to 221 (VESKVGQDSELENQDKKQEVKEAPPRELTEEEK). WD repeat units lie at residues 285 to 334 (SKHR…TTPE), 338 to 378 (HCQS…RTPV), 387 to 428 (AHTH…TPQE), 437 to 477 (SKPV…AGIG), 482 to 527 (GHQG…PLYS), 530 to 570 (DNAD…EVPT), and 576 to 615 (EGAS…VPHN). Position 635 is a phosphoserine (Ser635).

Belongs to the dynein intermediate chain family. As to quaternary structure, homodimer. The cytoplasmic dynein 1 complex consists of two catalytic heavy chains (HCs) and a number of non-catalytic subunits presented by intermediate chains (ICs), light intermediate chains (LICs) and light chains (LCs); the composition seems to vary in respect to the IC, LIC and LC composition. The heavy chain homodimer serves as a scaffold for the probable homodimeric assembly of the respective non-catalytic subunits. The ICs and LICs bind directly to the HC dimer and the LCs assemble on the IC dimer. Interacts with DYNC1H1. Interacts with DYNLT1 and DYNLT3. Interacts with DCTN1. Interacts with MCRS1; the interaction is required for the proper distribution of centriolar satellites.

The protein resides in the cytoplasm. Its subcellular location is the chromosome. It localises to the centromere. The protein localises to the kinetochore. It is found in the cytoskeleton. The protein resides in the spindle pole. In terms of biological role, acts as one of several non-catalytic accessory components of the cytoplasmic dynein 1 complex that are thought to be involved in linking dynein to cargos and to adapter proteins that regulate dynein function. Cytoplasmic dynein 1 acts as a motor for the intracellular retrograde motility of vesicles and organelles along microtubules. The intermediate chains mediate the binding of dynein to dynactin via its 150 kDa component (p150-glued) DCTN1. May play a role in mediating the interaction of cytoplasmic dynein with membranous organelles and kinetochores. The sequence is that of Cytoplasmic dynein 1 intermediate chain 1 (DYNC1I1) from Homo sapiens (Human).